The following is a 105-amino-acid chain: Multidrug resistance protein EbrA (105 aa).

A run of 4 helical transmembrane segments spans residues 2-22 (IAGY…AAML), 35-55 (VLVV…LQVI), 60-80 (SYAT…VLWF), and 87-104 (RNIA…LINL).

This sequence belongs to the drug/metabolite transporter (DMT) superfamily. Small multidrug resistance (SMR) (TC 2.A.7.1) family. EbrA/EbrB subfamily. The efflux pump is composed of EbrA and EbrB.

It is found in the cell membrane. In terms of biological role, part of a multidrug efflux pump. Confers resistance to cationic lipophilic dyes such as ethidium bromide, acriflavine, pyronine Y and safranin O. The efflux is probably coupled to an influx of protons. The protein is Multidrug resistance protein EbrA (ebrA) of Bacillus licheniformis (strain ATCC 14580 / DSM 13 / JCM 2505 / CCUG 7422 / NBRC 12200 / NCIMB 9375 / NCTC 10341 / NRRL NRS-1264 / Gibson 46).